The following is a 140-amino-acid chain: Nucleoside diphosphate kinase (140 aa).

Lys11, Phe59, Arg87, Thr93, Arg104, and Asn114 together coordinate ATP. The Pros-phosphohistidine intermediate role is filled by His117.

It belongs to the NDK family. Homotetramer. Requires Mg(2+) as cofactor.

It is found in the cytoplasm. The catalysed reaction is a 2'-deoxyribonucleoside 5'-diphosphate + ATP = a 2'-deoxyribonucleoside 5'-triphosphate + ADP. It catalyses the reaction a ribonucleoside 5'-diphosphate + ATP = a ribonucleoside 5'-triphosphate + ADP. Major role in the synthesis of nucleoside triphosphates other than ATP. The ATP gamma phosphate is transferred to the NDP beta phosphate via a ping-pong mechanism, using a phosphorylated active-site intermediate. The polypeptide is Nucleoside diphosphate kinase (Paracoccus denitrificans (strain Pd 1222)).